Consider the following 156-residue polypeptide: Transcription antitermination protein NusB (156 aa).

Belongs to the NusB family.

In terms of biological role, involved in transcription antitermination. Required for transcription of ribosomal RNA (rRNA) genes. Binds specifically to the boxA antiterminator sequence of the ribosomal RNA (rrn) operons. The chain is Transcription antitermination protein NusB from Vibrio cholerae serotype O1 (strain ATCC 39541 / Classical Ogawa 395 / O395).